The sequence spans 152 residues: Transposase for insertion sequence element IS200 (152 aa).

Mg(2+)-binding residues include histidine 61 and histidine 63. The active-site Nucleophile is tyrosine 125. A Mg(2+)-binding site is contributed by glutamine 129.

It belongs to the transposase 17 family. Homodimer. The cofactor is Mg(2+).

In terms of biological role, transposase responsible for transposition of the IS200 insertion sequence (IS) element. Transposition occurs in 2 main steps, excision from the donor DNA 'top strand' into a single strand circle and its subsequent reinsertion into the DNA target. This increases the copy number of the IS. The polypeptide is Transposase for insertion sequence element IS200 (tnpA1) (Salmonella typhi).